Reading from the N-terminus, the 209-residue chain is MARNLDPKCRQCRREGEKLFLKGEKCFTDKCAIERRAYAPGQHGQRSGQRLSGYGVQLREKQKIRRLYGVLERQFRKVYAEADRRRGQTGENLLQLLEGRLDSVAYRMGFGASRAEARQVVRHNGVLVNGKRVNIPSYTVRPGDVIELAEGTKGHLRVKAALEAAESRGFPEWIEVDAKAGKGVFKAYPQRSELSATINEGLVVELYSR.

In terms of domain architecture, S4 RNA-binding spans 99-179; it reads GRLDSVAYRM…FPEWIEVDAK (81 aa).

Belongs to the universal ribosomal protein uS4 family. In terms of assembly, part of the 30S ribosomal subunit. Contacts protein S5. The interaction surface between S4 and S5 is involved in control of translational fidelity.

Functionally, one of the primary rRNA binding proteins, it binds directly to 16S rRNA where it nucleates assembly of the body of the 30S subunit. In terms of biological role, with S5 and S12 plays an important role in translational accuracy. The sequence is that of Small ribosomal subunit protein uS4 from Azoarcus sp. (strain BH72).